The following is a 330-amino-acid chain: DNA-directed RNA polymerase subunit alpha (330 aa).

Residues 1–225 (MSDLAIPTIS…KQFASLVSHS (225 aa)) form an alpha N-terminal domain (alpha-NTD) region. The segment at 237–330 (VKYTIPEEKY…KKKNKGIDED (94 aa)) is alpha C-terminal domain (alpha-CTD).

Belongs to the RNA polymerase alpha chain family. As to quaternary structure, homodimer. The RNAP catalytic core consists of 2 alpha, 1 beta, 1 beta' and 1 omega subunit. When a sigma factor is associated with the core the holoenzyme is formed, which can initiate transcription.

It catalyses the reaction RNA(n) + a ribonucleoside 5'-triphosphate = RNA(n+1) + diphosphate. Functionally, DNA-dependent RNA polymerase catalyzes the transcription of DNA into RNA using the four ribonucleoside triphosphates as substrates. The protein is DNA-directed RNA polymerase subunit alpha of Dehalococcoides mccartyi (strain CBDB1).